The following is a 328-amino-acid chain: GMP reductase (328 aa).

Catalysis depends on cysteine 176, which acts as the Thioimidate intermediate. Residue 205–228 coordinates NADP(+); the sequence is IIADGGIRTHGDIAKSIRFGASMV.

It belongs to the IMPDH/GMPR family. GuaC type 2 subfamily.

The enzyme catalyses IMP + NH4(+) + NADP(+) = GMP + NADPH + 2 H(+). Its function is as follows. Catalyzes the irreversible NADPH-dependent deamination of GMP to IMP. It functions in the conversion of nucleobase, nucleoside and nucleotide derivatives of G to A nucleotides, and in maintaining the intracellular balance of A and G nucleotides. This Streptococcus pneumoniae (strain Hungary19A-6) protein is GMP reductase.